Reading from the N-terminus, the 143-residue chain is WW domain-containing protein C660.05 (143 aa).

One can recognise a WW domain in the interval 9–44 (GLPAGWVAQWDPTYQAYFYINETFEGAQPQWEPPIP). Residues 115 to 143 (HHGPLHGPHGGFGGRGGGRMGGRGGRGRR) are disordered.

In Schizosaccharomyces pombe (strain 972 / ATCC 24843) (Fission yeast), this protein is WW domain-containing protein C660.05.